Here is a 182-residue protein sequence, read N- to C-terminus: Large ribosomal subunit protein uL6 (182 aa).

Belongs to the universal ribosomal protein uL6 family. In terms of assembly, part of the 50S ribosomal subunit.

In terms of biological role, this protein binds to the 23S rRNA, and is important in its secondary structure. It is located near the subunit interface in the base of the L7/L12 stalk, and near the tRNA binding site of the peptidyltransferase center. This chain is Large ribosomal subunit protein uL6, found in Methanocaldococcus jannaschii (strain ATCC 43067 / DSM 2661 / JAL-1 / JCM 10045 / NBRC 100440) (Methanococcus jannaschii).